The following is a 478-amino-acid chain: Proline--tRNA ligase (478 aa).

Belongs to the class-II aminoacyl-tRNA synthetase family. ProS type 3 subfamily. As to quaternary structure, homodimer.

It localises to the cytoplasm. It catalyses the reaction tRNA(Pro) + L-proline + ATP = L-prolyl-tRNA(Pro) + AMP + diphosphate. Its function is as follows. Catalyzes the attachment of proline to tRNA(Pro) in a two-step reaction: proline is first activated by ATP to form Pro-AMP and then transferred to the acceptor end of tRNA(Pro). This Clostridium botulinum (strain Loch Maree / Type A3) protein is Proline--tRNA ligase.